Consider the following 409-residue polypeptide: Arginine/serine-rich coiled-coil protein 2 (409 aa).

A compositionally biased stretch (basic and acidic residues) spans 1-31 (MASSDTERDGGSPEKHSPVTDKHLEHSDLAK). Positions 1–204 (MASSDTERDG…PSPPAFRGRN (204 aa)) are disordered. The segment covering 34–50 (RGLKHYSKSRSRSREHK) has biased composition (basic residues). Residues 64–108 (RSKEARRHEVKEKSSKKHRPDDSIDRDHSDKVRERLNSSENGEER) show a composition bias toward basic and acidic residues. Basic residues predominate over residues 109 to 191 (HRRKEKRSSR…KPRRHSRSRS (83 aa)). The stretch at 204-244 (NTAMDAQEALARRLERAKKLQEQREKEMADKQKQQETVAVA) forms a coiled coil.

It belongs to the RSRC2 family.

The protein is Arginine/serine-rich coiled-coil protein 2 (rsrc2) of Xenopus tropicalis (Western clawed frog).